A 471-amino-acid chain; its full sequence is Tryptophanase (471 aa).

N6-acetyllysine occurs at positions 5, 115, and 156. Lys270 is modified (N6-(pyridoxal phosphate)lysine). Lys450 carries the post-translational modification N6-acetyllysine.

This sequence belongs to the beta-eliminating lyase family. As to quaternary structure, homotetramer. Requires pyridoxal 5'-phosphate as cofactor.

The catalysed reaction is L-tryptophan + H2O = indole + pyruvate + NH4(+). The protein operates within amino-acid degradation; L-tryptophan degradation via pyruvate pathway; indole and pyruvate from L-tryptophan: step 1/1. The polypeptide is Tryptophanase (Escherichia coli O9:H4 (strain HS)).